We begin with the raw amino-acid sequence, 401 residues long: Elongation factor Tu 1 (401 aa).

Residues 10 to 209 (KPHVNVGTIG…AVDEYIPTPV (200 aa)) enclose the tr-type G domain. Residues 19–26 (GHVDHGKT) form a G1 region. Residue 19-26 (GHVDHGKT) participates in GTP binding. Thr-26 is a Mg(2+) binding site. Residues 60–64 (GITIA) are G2. Residues 81–84 (DCPG) form a G3 region. GTP contacts are provided by residues 81 to 85 (DCPGH) and 136 to 139 (NKVD). The interval 136–139 (NKVD) is G4. A G5 region spans residues 174-176 (SAL).

The protein belongs to the TRAFAC class translation factor GTPase superfamily. Classic translation factor GTPase family. EF-Tu/EF-1A subfamily. In terms of assembly, monomer.

The protein resides in the cytoplasm. The catalysed reaction is GTP + H2O = GDP + phosphate + H(+). GTP hydrolase that promotes the GTP-dependent binding of aminoacyl-tRNA to the A-site of ribosomes during protein biosynthesis. The polypeptide is Elongation factor Tu 1 (Roseiflexus sp. (strain RS-1)).